Consider the following 199-residue polypeptide: Twist-related protein (199 aa).

Positions 1 to 43 (MQEHQLSRVTSGNKKKYQSFDDESRDEKRMKCDSTDKLESNSN) are disordered. Residues 25–39 (RDEKRMKCDSTDKLE) show a composition bias toward basic and acidic residues. A bHLH domain is found at 51–102 (THRVIANIRERQRTQALNQSFSTLRKIIPTLPSDKLSKIQTLRLAAMYIDFL).

Efficient DNA binding requires dimerization with another bHLH protein. Homodimer. As to expression, expression is seen at the point of medusa formation in the ectodermal and endodermal bud tissues, and in the entocodon which gives rise to all smooth and striated muscle cells. After the subumbrellar plate differentiates from the endoderm, strong expression is detected until the medusa detaches from the gonzoid. Expression is observed in the distal part of the medusa but diminishes in entocodon-derived muscles as the tissues differentiate, with expression disappearing completely after stage 8. In later stages expression is seen in the distal and proximal parts of the bud and depending on state of maturity, in the developing gonadal tissue.

The protein resides in the nucleus. Probable transcription factor, which may be responsible for the formation of myoepithelial cells in early muscle development in larva and the formation of non-muscle tissues in later bud stages and mesoderm-like structures in the medusa. The polypeptide is Twist-related protein (Podocoryna carnea (Hydrozoan)).